Consider the following 317-residue polypeptide: AT-hook motif nuclear-localized protein 22 (317 aa).

Disordered stretches follow at residues 22–41 and 48–106; these read HHQFQHQQQQQQQNHGHDID and LKRD…KPPI. A compositionally biased stretch (low complexity) spans 26 to 35; sequence QHQQQQQQQN. A compositionally biased stretch (basic and acidic residues) spans 48 to 64; it reads LKRDRDADIDPNEHSSA. Residues 72 to 84 are compositionally biased toward gly residues; sequence GSGGESGGGGGGD. Residues 89-101 constitute a DNA-binding region (a.T hook); sequence RRPRGRPAGSKNK. The 141-residue stretch at 113–253 folds into the PPC domain; sequence ANALKSHVME…EDDQEEQTAG (141 aa). Residues 258–285 are disordered; it reads NIDGNATMGGGTQTQTQTQQQQQQQLMQ. Over residues 270–282 the composition is skewed to low complexity; that stretch reads QTQTQTQQQQQQQ.

Homodimer. Interacts with HDA1/HDA19, HDA6 and HDA9. As to expression, expressed at the hypocotyl-root transition zone and the root hair zone. Also detected in the inflorescence.

Its subcellular location is the nucleus. Functionally, transcription factor that specifically binds AT-rich DNA sequences related to the nuclear matrix attachment regions (MARs). Binds an AT-rich DNA sequences in the FLOWERING LOCUS T (FT) promoter. Acts redundantly with AHL18, AHL27 and AHL29 in the regulation of flowering and regulation of the hypocotyl elongation. Plays a role in both photo- and skotomorphogenesis. Acts as a chromatin remodeling factor that modifies the architecture of FLOWERING LOCUS T (FT) chromatin by modulating both H3 acetylation and methylation leading to the regulation of FT expression during flowering induction. In Arabidopsis thaliana (Mouse-ear cress), this protein is AT-hook motif nuclear-localized protein 22.